The sequence spans 461 residues: CBL-interacting protein kinase 1 (461 aa).

In terms of domain architecture, Protein kinase spans tyrosine 19–phenylalanine 274. ATP contacts are provided by residues leucine 25–valine 33 and lysine 48. The active-site Proton acceptor is aspartate 142. Residues aspartate 160–glutamate 189 form an activation loop region. An NAF domain is found at glutamate 308 to glutamate 332. The PPI stretch occupies residues glutamine 338–valine 367.

This sequence belongs to the protein kinase superfamily. CAMK Ser/Thr protein kinase family. SNF1 subfamily. Mn(2+) serves as cofactor.

The enzyme catalyses L-seryl-[protein] + ATP = O-phospho-L-seryl-[protein] + ADP + H(+). The catalysed reaction is L-threonyl-[protein] + ATP = O-phospho-L-threonyl-[protein] + ADP + H(+). In terms of biological role, CIPK serine-threonine protein kinases interact with CBL proteins. Binding of a CBL protein to the regulatory NAF domain of CIPK protein lead to the activation of the kinase in a calcium-dependent manner. The sequence is that of CBL-interacting protein kinase 1 (CIPK1) from Oryza sativa subsp. japonica (Rice).